Consider the following 203-residue polypeptide: Thymidylate kinase (203 aa).

Position 10-17 (10-17 (GTEGSGKS)) interacts with ATP.

Belongs to the thymidylate kinase family.

The catalysed reaction is dTMP + ATP = dTDP + ADP. In terms of biological role, phosphorylation of dTMP to form dTDP in both de novo and salvage pathways of dTTP synthesis. The chain is Thymidylate kinase from Dichelobacter nodosus (strain VCS1703A).